We begin with the raw amino-acid sequence, 272 residues long: Glutamate racemase (272 aa).

Substrate is bound by residues 16-17 (DS) and 48-49 (YG). Cysteine 79 (proton donor/acceptor) is an active-site residue. Residue 80 to 81 (NT) participates in substrate binding. The active-site Proton donor/acceptor is cysteine 191. A substrate-binding site is contributed by 192-193 (TH).

It belongs to the aspartate/glutamate racemases family.

It catalyses the reaction L-glutamate = D-glutamate. It functions in the pathway cell wall biogenesis; peptidoglycan biosynthesis. Functionally, provides the (R)-glutamate required for cell wall biosynthesis. This chain is Glutamate racemase, found in Chlorobium phaeobacteroides (strain DSM 266 / SMG 266 / 2430).